Here is a 199-residue protein sequence, read N- to C-terminus: Nucleoside triphosphate pyrophosphatase (199 aa).

Residue Asp76 is the Proton acceptor of the active site.

Belongs to the Maf family. Requires a divalent metal cation as cofactor.

It is found in the cytoplasm. The catalysed reaction is a ribonucleoside 5'-triphosphate + H2O = a ribonucleoside 5'-phosphate + diphosphate + H(+). It catalyses the reaction a 2'-deoxyribonucleoside 5'-triphosphate + H2O = a 2'-deoxyribonucleoside 5'-phosphate + diphosphate + H(+). In terms of biological role, nucleoside triphosphate pyrophosphatase. May have a dual role in cell division arrest and in preventing the incorporation of modified nucleotides into cellular nucleic acids. The chain is Nucleoside triphosphate pyrophosphatase from Ruegeria pomeroyi (strain ATCC 700808 / DSM 15171 / DSS-3) (Silicibacter pomeroyi).